A 264-amino-acid polypeptide reads, in one-letter code: ATP synthase subunit a (264 aa).

5 helical membrane passes run 39–59, 97–117, 139–159, 205–225, and 239–259; these read LDTL…FYIV, VAPL…MDLV, TADP…VIFY, LFGN…LPWW, and LLVI…YISL.

The protein belongs to the ATPase A chain family. As to quaternary structure, F-type ATPases have 2 components, CF(1) - the catalytic core - and CF(0) - the membrane proton channel. CF(1) has five subunits: alpha(3), beta(3), gamma(1), delta(1), epsilon(1). CF(0) has three main subunits: a(1), b(2) and c(9-12). The alpha and beta chains form an alternating ring which encloses part of the gamma chain. CF(1) is attached to CF(0) by a central stalk formed by the gamma and epsilon chains, while a peripheral stalk is formed by the delta and b chains.

The protein resides in the cell inner membrane. Key component of the proton channel; it plays a direct role in the translocation of protons across the membrane. The polypeptide is ATP synthase subunit a (Coxiella burnetii (strain CbuK_Q154) (Coxiella burnetii (strain Q154))).